The primary structure comprises 579 residues: MKPPDRPTPGRTDRILGVMGGMLRACAVPGQEGPQERDPLGPGSTKTESECTEEDQTGEREREVLAWAPQPESYSIAGSEGSMSASAVSGLAALSGPSSGLSSHPCSPVPPGPVTGLRRWLDHSKHCLSVETEADSGQTRQCENWMLEPTLTTGQELPELTLLTTLLEGPGVKAQPAEEETLSQAPKNEEEQKKTALERSMFVLSELVETERMYVDDLGQIVEGYMATMATQGVPESLRGRDRIVFGNIQQIYEWHRDYFLQELQQCLKDPDWLAQLFIKHERRLHMYVVYCQNKPKSEHVLSEFGDSYFEELRQQLGHRLQLSDLLIKPVQRIMKYQLLLKDFLKYYRRAGMDTEELEQAVEVMCFVPKRCNDMMSLGRLRGFEGKLTAQGKLLGQDTFLVTEPEAGGLLSSRGRERRVFLFEQIVIFSEALGGGGRGGTQPGYVYKNSIKASDPAVSQAWIKQVAQILESQRDFLNALQSPIEYQRRESQTNSLGRSGGPGVGSPGRMAQVSMHTPINGSLPSLLLLPRGEVPRAPLPLDTQALSETPLTPYDPPALPTVNSPPGQARLAKLDEDEL.

2 disordered regions span residues 27–61 (AVPG…GERE) and 172–194 (VKAQ…EQKK). Residues 199-375 (RSMFVLSELV…CFVPKRCNDM (177 aa)) form the DH domain. An important for binding to Rho GTPases region spans residues 317–338 (LGHRLQLSDLLIKPVQRIMKYQ). Residues 380–499 (RLRGFEGKLT…ESQTNSLGRS (120 aa)) form the PH domain. The tract at residues 472–498 (SQRDFLNALQSPIEYQRRESQTNSLGR) is sufficient to bind activated GNAQ. Disordered regions lie at residues 487 to 516 (QRRE…VSMH) and 546 to 579 (LSET…EDEL).

In terms of assembly, interacts with activated GNAQ and GNA11. Interacts with RHOA, CDC42 and RAC1. Interacts (via the DH domain) with POPDC1 (via the C-terminus cytoplasmic tail).

The protein resides in the cytoplasm. It is found in the myofibril. It localises to the sarcomere. Its subcellular location is the cell membrane. Functionally, may play a role in actin cytoskeleton reorganization in different tissues since its activation induces formation of actin stress fibers. It works as a guanine nucleotide exchange factor for Rho family of small GTPases. Links specifically G alpha q/11-coupled receptors to RHOA activation. May be an important regulator of processes involved in axon and dendrite formation. In neurons seems to be an exchange factor primarily for RAC1. Involved in skeletal myogenesis. This is Rho guanine nucleotide exchange factor 25 (Arhgef25) from Rattus norvegicus (Rat).